The sequence spans 296 residues: Protein FAM221A (296 aa).

A disordered region spans residues 235–263; that stretch reads MQPPSTSSPQPLAVGPSTQISSLRKPEED. The span at 237–256 shows a compositional bias: polar residues; it reads PPSTSSPQPLAVGPSTQISS.

It belongs to the FAM221 family.

The sequence is that of Protein FAM221A (Fam221a) from Rattus norvegicus (Rat).